The sequence spans 212 residues: Ribosomal RNA small subunit methyltransferase G (212 aa).

S-adenosyl-L-methionine-binding positions include Gly80, Leu85, 131–132 (AE), and Arg146.

Belongs to the methyltransferase superfamily. RNA methyltransferase RsmG family.

The protein localises to the cytoplasm. It carries out the reaction guanosine(527) in 16S rRNA + S-adenosyl-L-methionine = N(7)-methylguanosine(527) in 16S rRNA + S-adenosyl-L-homocysteine. Functionally, specifically methylates the N7 position of guanine in position 527 of 16S rRNA. This chain is Ribosomal RNA small subunit methyltransferase G, found in Xanthomonas campestris pv. campestris (strain 8004).